The sequence spans 266 residues: Pre-mRNA-splicing factor PRP11 (266 aa).

The segment at 1–21 (MNYLEGVGSKKGGGGIASESQ) is disordered. The Matrin-type zinc finger occupies 66-96 (LVCKLCNTMHMSWSSVERHLGGKKHGLNVLR).

This sequence belongs to the SF3A2 family. In terms of assembly, belongs to the CWC complex (or CEF1-associated complex), a spliceosome sub-complex reminiscent of a late-stage spliceosome composed of the U2, U5 and U6 snRNAs and at least BUD13, BUD31, BRR2, CDC40, CEF1, CLF1, CUS1, CWC2, CWC15, CWC21, CWC22, CWC23, CWC24, CWC25, CWC27, ECM2, HSH155, IST3, ISY1, LEA1, MSL1, NTC20, PRP8, PRP9, PRP11, PRP19, PRP21, PRP22, PRP45, PRP46, SLU7, SMB1, SMD1, SMD2, SMD3, SMX2, SMX3, SNT309, SNU114, SPP2, SYF1, SYF2, RSE1 and YJU2. Interacts with CUS2.

It is found in the nucleus. Functionally, mRNA splicing factors, PRP9, PRP11, and PRP21, are necessary for addition of the U2 snRNP to the pre-mRNA in an early step of spliceosome assembly. In Saccharomyces cerevisiae (strain ATCC 204508 / S288c) (Baker's yeast), this protein is Pre-mRNA-splicing factor PRP11 (PRP11).